The primary structure comprises 230 residues: Maleylacetoacetate isomerase (230 aa).

In terms of domain architecture, GST N-terminal spans 7 to 95 (LRVTLYTYFR…YLDEAFPDNP (89 aa)). Residues 17–22 (SSCSAR), Gln46, Val60, 79–80 (QS), Gln123, and 127–129 (NLR) each bind glutathione. The GST C-terminal domain maps to 104-226 (NPQQRALVRS…HWRTQQDTPT (123 aa)).

The protein belongs to the GST superfamily. Zeta family. The cofactor is glutathione.

The protein resides in the cytoplasm. It carries out the reaction 4-maleylacetoacetate = 4-fumarylacetoacetate. It participates in amino-acid degradation; L-phenylalanine degradation; acetoacetate and fumarate from L-phenylalanine: step 5/6. This chain is Maleylacetoacetate isomerase (maiA), found in Emericella nidulans (strain FGSC A4 / ATCC 38163 / CBS 112.46 / NRRL 194 / M139) (Aspergillus nidulans).